Consider the following 259-residue polypeptide: Triosephosphate isomerase (259 aa).

10 to 12 (NWK) contacts substrate. His102 (electrophile) is an active-site residue. Glu172 serves as the catalytic Proton acceptor. Residues Gly178, Ser218, and 239–240 (GG) each bind substrate.

The protein belongs to the triosephosphate isomerase family. As to quaternary structure, homodimer.

The protein localises to the cytoplasm. It catalyses the reaction D-glyceraldehyde 3-phosphate = dihydroxyacetone phosphate. It participates in carbohydrate biosynthesis; gluconeogenesis. The protein operates within carbohydrate degradation; glycolysis; D-glyceraldehyde 3-phosphate from glycerone phosphate: step 1/1. Its function is as follows. Involved in the gluconeogenesis. Catalyzes stereospecifically the conversion of dihydroxyacetone phosphate (DHAP) to D-glyceraldehyde-3-phosphate (G3P). This is Triosephosphate isomerase from Leifsonia xyli subsp. xyli (strain CTCB07).